Consider the following 146-residue polypeptide: Snaclec stejaggregin-B subunit beta-2 (146 aa).

A signal peptide spans 1–23 (MGRFIFVSFGLLVVFLSLSGSGA). Residues 32–143 (YDLYCYRVFQ…CSQTYPFVCK (112 aa)) form the C-type lectin domain. Cystine bridges form between Cys53/Cys142 and Cys119/Cys134.

This sequence belongs to the snaclec family. Heteromultimer; disulfide-linked. Expressed by the venom gland.

The protein localises to the secreted. In terms of biological role, interferes with one step of hemostasis (modulation of platelet aggregation, or coagulation cascade, for example). The sequence is that of Snaclec stejaggregin-B subunit beta-2 from Trimeresurus stejnegeri (Chinese green tree viper).